The sequence spans 207 residues: Partner of Y14 and mago (207 aa).

Disordered stretches follow at residues 1–28 (MSTYLQSSEGKFIPATKRPDGTWRKARR) and 52–133 (QRQA…NSIS). A coiled-coil region spans residues 64–91 (LLAAESKKEREKQERTRAKKQEKESGRQ). Residues 68-90 (ESKKEREKQERTRAKKQEKESGR) show a composition bias toward basic and acidic residues. The span at 123–133 (PSGSRDINSIS) shows a compositional bias: polar residues. Positions 152–184 (AKQLKKLRKKIREIEQIESRIQAGEQKKLDKDQ) form a coiled coil.

The protein belongs to the pym family. Interacts (via N-terminus) with mago and tsu/RBM8A; the interaction is direct. Expression detected in the ovary. In the oocyte expressed in the germarium, nurse cell and follicle cell.

Its subcellular location is the cytoplasm. It localises to the nucleus. Its function is as follows. Regulator of the exon junction complex (EJC), a multiprotein complex that associates immediately upstream of the exon-exon junction on mRNAs and serves as a positional landmark for the intron exon structure of genes and directs post-transcriptional processes in the cytoplasm such as mRNA export, nonsense-mediated mRNA decay (NMD) or translation. Acts as an EJC disassembly factor by disrupting mature EJC from spliced mRNAs. Required for normal localization of osk mRNA to the posterior pole of the developing oocyte. Does not interact with the small ribosomal unit or components of the translation initiation complex. May not function in cap-dependent translation regulation. In Drosophila melanogaster (Fruit fly), this protein is Partner of Y14 and mago.